Here is a 311-residue protein sequence, read N- to C-terminus: MAKNKIAIIGAGHTGSTLAFIIAERALADVVLLEIPKNEKPARGKALDIKESGPILGFNGNVLGTSDYQDIAGADIVVITAGAARKPGMSRDDLIQINENVMAQVTEGIKKYAPESKIIVLTNPVDAMTYAVYKLSGFPKERVLGQSGILDTARYRTFVSEALNVAQTDVTGLVLGGHGDTMVPLLSTTMVGGVPLRELLAQDKIDAIVERTRKGGAEIVGLLGNGSAYYAPAAAIYEMAAAILNDERRLVPAITYLDGEYGFKDICLGVPTILGANGVEKVVEIELSDDEQQLRDSADAVEDVKSALKNK.

10–15 (GAGHTG) contributes to the NAD(+) binding site. Substrate contacts are provided by R85 and R91. Residues N98 and 121–123 (LTN) contribute to the NAD(+) site. 2 residues coordinate substrate: N123 and R154. Catalysis depends on H178, which acts as the Proton acceptor.

This sequence belongs to the LDH/MDH superfamily. MDH type 3 family.

It catalyses the reaction (S)-malate + NAD(+) = oxaloacetate + NADH + H(+). Its function is as follows. Catalyzes the reversible oxidation of malate to oxaloacetate. This Staphylococcus carnosus (strain TM300) protein is Malate dehydrogenase.